A 574-amino-acid polypeptide reads, in one-letter code: MGTSSGSNHPHQMLPPRQQQRSGGGLETALSLVSSDQEPRRESPAESASSQETWPLGDTVAGKKSMSQKTEPDSMEQTVNVMHHVSNADKVSVRDIARERVELVAERMHRLPDEFLDELKNGLKSILEGNVAQSVDEFMFLQKVVQSRTDLSSVTLVRAHRVQLEILVAINTGIQAFLHPNISLSQPSLIEIFVYKRCRNIACQNQLPADDCYCDICTNRKGFCNLCMCTICNKFDFSVNTCRWIGCDLCSHWTHTDCAIRDGQITTGSSAKNNTSGPGEIVFKCRACNRTSELLGWVKDVFQHCAPNWDRESLMKELDFVSRIFRGSEDQRGRKLFWKCEELIDKIKGGLAEATAAKLILMFFQEIESDSAKSFENGEGGRLMAPQDACNRIAEVVQETLRKMEIVAEEKMRMFKKARMALETCDRELEDKAKEVSELKAERQKKKLQIDELERIVRLKQAEADMFQLKANEAKREADRLQRIVLAKMDKSEEEYASNYLKQRLSEAEAEKQYLFEKIKLQENSRVASQSSGGGGDPSQVMMYSKIRDLLQGYNLSPKVDPQLNERNPFRSNP.

2 stretches are compositionally biased toward polar residues: residues 1–10 (MGTSSGSNHP) and 65–76 (SMSQKTEPDSME). Residues 1–76 (MGTSSGSNHP…SQKTEPDSME (76 aa)) are disordered. The PHD-type zinc-finger motif lies at 226 to 291 (LCMCTICNKF…VFKCRACNRT (66 aa)). Positions 416–524 (KKARMALETC…LFEKIKLQEN (109 aa)) form a coiled coil.

Self-interacts. Interacts with OBE1, OBE3 and OBE4. Binds to VPg of pea seed borne mosaic virus (PSbMV), turnip mosaic virus (TuMV) and lettuce mosaic virus (LMV), but not with VPg of tobacco etch virus (TEV), cowpea mosaic virus (CPMV), tomato black ring virus (TBRV) and grapevine fan leaf virus (GFLV). Expressed in roots, seedlings, stems, leaves, flowers and siliques, especially in the vasculature.

The protein resides in the nucleus. Probable transcription factor that acts together with OBE1 for the maintenance and/or establishment of both the shoot and root meristems, probably by controlling the expression of the meristem genes such as WUS, PLT1 and PLT2 and of genes required for auxin responses. Promotes cell meristematic activity via the WUSCHEL-CLAVATA pathway. Involved in the development of the basal pole and in auxin-mediated root and vascular development in the embryo. Confers sensitivity to turnip mosaic virus (TuMV) probably by promoting viral movement and multiplication via interaction with TuMV VPg. In Arabidopsis thaliana (Mouse-ear cress), this protein is Protein OBERON 2.